Reading from the N-terminus, the 479-residue chain is Ribulose bisphosphate carboxylase large chain (479 aa).

The propeptide occupies 1 to 2 (MS). P3 carries the post-translational modification N-acetylproline. Substrate contacts are provided by residues T65, N123, 173–177 (TIKPK), and 201–204 (KDDE). K175 functions as the Proton acceptor in the catalytic mechanism. 3 residues coordinate Mg(2+): K201, D203, and E204. K201 bears the N6-carboxylysine mark. S208 carries the phosphoserine modification. H294 serves as the catalytic Proton acceptor. Substrate is bound by residues 294–295 (HR) and H327. The residue at position 330 (T330) is a Phosphothreonine. Residues K334 and 379 to 381 (SGG) contribute to the substrate site.

This sequence belongs to the RuBisCO large chain family. Type I subfamily. In terms of assembly, heterohexadecamer of 8 large chains and 8 small chains; disulfide-linked. The disulfide link is formed within the large subunit homodimers. Interacts with RBCX1 and RBCX1. An intermediate complex made of eight RbcL subunits interacts with the chaperone BSD2. Requires Mg(2+) as cofactor. In terms of processing, the disulfide bond which can form in the large chain dimeric partners within the hexadecamer appears to be associated with oxidative stress and protein turnover.

The protein localises to the plastid. The protein resides in the chloroplast. The enzyme catalyses 2 (2R)-3-phosphoglycerate + 2 H(+) = D-ribulose 1,5-bisphosphate + CO2 + H2O. It catalyses the reaction D-ribulose 1,5-bisphosphate + O2 = 2-phosphoglycolate + (2R)-3-phosphoglycerate + 2 H(+). In terms of biological role, ruBisCO catalyzes two reactions: the carboxylation of D-ribulose 1,5-bisphosphate, the primary event in carbon dioxide fixation, as well as the oxidative fragmentation of the pentose substrate in the photorespiration process. Both reactions occur simultaneously and in competition at the same active site. Binds to abscisic acid (ABA). In Arabidopsis thaliana (Mouse-ear cress), this protein is Ribulose bisphosphate carboxylase large chain.